A 398-amino-acid chain; its full sequence is Phosphoglycerate kinase (398 aa).

Substrate contacts are provided by residues 23–25 (DFN), Arg-38, 61–64 (HLGK), Arg-122, and Arg-155. Residues Lys-206, Gly-297, Glu-328, and 354–357 (GGDS) contribute to the ATP site.

This sequence belongs to the phosphoglycerate kinase family. Monomer.

The protein resides in the cytoplasm. It carries out the reaction (2R)-3-phosphoglycerate + ATP = (2R)-3-phospho-glyceroyl phosphate + ADP. It functions in the pathway carbohydrate degradation; glycolysis; pyruvate from D-glyceraldehyde 3-phosphate: step 2/5. In Clostridium kluyveri (strain NBRC 12016), this protein is Phosphoglycerate kinase.